The chain runs to 37 residues: Large ribosomal subunit protein bL36c (37 aa).

The protein belongs to the bacterial ribosomal protein bL36 family.

It is found in the plastid. The protein resides in the chloroplast. This is Large ribosomal subunit protein bL36c from Mesembryanthemum crystallinum (Common ice plant).